The following is a 345-amino-acid chain: Holliday junction branch migration complex subunit RuvB (345 aa).

The tract at residues 4-185 (TDRLIAPSTQ…FGIVSRLEFY (182 aa)) is large ATPase domain (RuvB-L). Residues Leu24, Arg25, Gly66, Lys69, Thr70, Thr71, 132-134 (EDY), Arg175, Tyr185, and Arg222 each bind ATP. Mg(2+) is bound at residue Thr70. The interval 186–256 (TADELARIVH…IADAALKMLD (71 aa)) is small ATPAse domain (RuvB-S). The head domain (RuvB-H) stretch occupies residues 259 to 345 (KLGFDVMDRK…KIGTGELWQQ (87 aa)). DNA contacts are provided by Arg295, Arg314, and Arg319.

Belongs to the RuvB family. In terms of assembly, homohexamer. Forms an RuvA(8)-RuvB(12)-Holliday junction (HJ) complex. HJ DNA is sandwiched between 2 RuvA tetramers; dsDNA enters through RuvA and exits via RuvB. An RuvB hexamer assembles on each DNA strand where it exits the tetramer. Each RuvB hexamer is contacted by two RuvA subunits (via domain III) on 2 adjacent RuvB subunits; this complex drives branch migration. In the full resolvosome a probable DNA-RuvA(4)-RuvB(12)-RuvC(2) complex forms which resolves the HJ.

The protein resides in the cytoplasm. It carries out the reaction ATP + H2O = ADP + phosphate + H(+). Functionally, the RuvA-RuvB-RuvC complex processes Holliday junction (HJ) DNA during genetic recombination and DNA repair, while the RuvA-RuvB complex plays an important role in the rescue of blocked DNA replication forks via replication fork reversal (RFR). RuvA specifically binds to HJ cruciform DNA, conferring on it an open structure. The RuvB hexamer acts as an ATP-dependent pump, pulling dsDNA into and through the RuvAB complex. RuvB forms 2 homohexamers on either side of HJ DNA bound by 1 or 2 RuvA tetramers; 4 subunits per hexamer contact DNA at a time. Coordinated motions by a converter formed by DNA-disengaged RuvB subunits stimulates ATP hydrolysis and nucleotide exchange. Immobilization of the converter enables RuvB to convert the ATP-contained energy into a lever motion, pulling 2 nucleotides of DNA out of the RuvA tetramer per ATP hydrolyzed, thus driving DNA branch migration. The RuvB motors rotate together with the DNA substrate, which together with the progressing nucleotide cycle form the mechanistic basis for DNA recombination by continuous HJ branch migration. Branch migration allows RuvC to scan DNA until it finds its consensus sequence, where it cleaves and resolves cruciform DNA. The sequence is that of Holliday junction branch migration complex subunit RuvB from Methylobacillus flagellatus (strain ATCC 51484 / DSM 6875 / VKM B-1610 / KT).